Here is a 1047-residue protein sequence, read N- to C-terminus: Ras GTPase-activating protein 1 (1047 aa).

Met-1 carries the post-translational modification N-acetylmethionine. Residues 181-272 form the SH2 1 domain; it reads WYHGKLDRTI…LKGEKLLYPV (92 aa). One can recognise an SH3 domain in the interval 279 to 341; the sequence is EDRRRVRAIL…VEDLVEEVGR (63 aa). The 91-residue stretch at 351-441 folds into the SH2 2 domain; it reads WFHGKISKQE…VEGYYLKEPV (91 aa). Residues 474–577 enclose the PH domain; it reads NIVKKGYLLK…WMKGLQAFCN (104 aa). In terms of domain architecture, C2 spans 577 to 690; it reads NLRKSSPGTS…QKGHATDEWF (114 aa). A Phosphotyrosine modification is found at Tyr-615. Positions 764 to 974 constitute a Ras-GAP domain; the sequence is KLESLLLCTL…HRMIMFLDEL (211 aa). Ser-831 carries the post-translational modification Phosphoserine.

In terms of assembly, interacts with SQSTM1. Interacts with SPSB1; the interaction does not promote degradation. Interacts with CAV2 (tyrosine phosphorylated form). Directly interacts with NCK1. Interacts with PDGFRB (tyrosine phosphorylated). Interacts (via SH2 domain) with the 'Tyr-9' phosphorylated form of PDPK1. Interacts with tyrosine-phosphorylated EPHB4. In terms of processing, the N-terminus is blocked. Post-translationally, phosphorylated by SRC and LCK. The phosphorylation SRC inhibits its ability to stimulate the Ras-GTPase activity, whereas phosphorylation by LCK does not display any effect on stimulation activity. In placental villi, detected only in the trophoblast layer (cytotrophoblast and syncytiotrophoblast). Not detected in stromal, endothelial or Hofbauer cells (at protein level).

It localises to the cytoplasm. Its function is as follows. Inhibitory regulator of the Ras-cyclic AMP pathway. Stimulates the GTPase of normal but not oncogenic Ras p21; this stimulation may be further increased in the presence of NCK1. This is Ras GTPase-activating protein 1 (RASA1) from Homo sapiens (Human).